We begin with the raw amino-acid sequence, 545 residues long: tRNA-2-methylthio-N(6)-dimethylallyladenosine synthase (545 aa).

The segment at 1 to 32 (MSSASPLARCCDEATPSAGPRAAQPPYHGPVT) is disordered. The MTTase N-terminal domain occupies 58 to 174 (RTYQVRTYGC…LPTLLERARH (117 aa)). The [4Fe-4S] cluster site is built by cysteine 67, cysteine 103, cysteine 137, cysteine 211, cysteine 215, and cysteine 218. Residues 197–433 (RESAYAAWVS…IALQEQISLE (237 aa)) enclose the Radical SAM core domain. In terms of domain architecture, TRAM spans 436–504 (RALVGQAVEV…PHHLIADAGV (69 aa)).

This sequence belongs to the methylthiotransferase family. MiaB subfamily. Monomer. [4Fe-4S] cluster is required as a cofactor.

The protein resides in the cytoplasm. The catalysed reaction is N(6)-dimethylallyladenosine(37) in tRNA + (sulfur carrier)-SH + AH2 + 2 S-adenosyl-L-methionine = 2-methylsulfanyl-N(6)-dimethylallyladenosine(37) in tRNA + (sulfur carrier)-H + 5'-deoxyadenosine + L-methionine + A + S-adenosyl-L-homocysteine + 2 H(+). Its function is as follows. Catalyzes the methylthiolation of N6-(dimethylallyl)adenosine (i(6)A), leading to the formation of 2-methylthio-N6-(dimethylallyl)adenosine (ms(2)i(6)A) at position 37 in tRNAs that read codons beginning with uridine. The chain is tRNA-2-methylthio-N(6)-dimethylallyladenosine synthase from Mycobacterium bovis (strain BCG / Pasteur 1173P2).